Reading from the N-terminus, the 504-residue chain is L-carnitine/gamma-butyrobetaine antiporter (504 aa).

Transmembrane regions (helical) follow at residues 10 to 30 (IEPK…WLTV), 51 to 71 (WGWA…WLVF), 92 to 112 (IFMM…SIEI), 143 to 163 (GPLP…FFFV), 195 to 215 (FYLV…TPLV), 231 to 251 (LDAI…ACGL), 263 to 283 (SYLS…SFIM), 316 to 336 (WTVF…IFLA), 347 to 367 (LCFG…TVLG), 398 to 418 (WAAL…CFIA), 446 to 466 (LLVR…LLAL), and 475 to 495 (AIIA…LSFI).

It belongs to the BCCT transporter (TC 2.A.15) family. CaiT subfamily. Homotrimer.

The protein localises to the cell inner membrane. It catalyses the reaction 4-(trimethylamino)butanoate(in) + (R)-carnitine(out) = 4-(trimethylamino)butanoate(out) + (R)-carnitine(in). The protein operates within amine and polyamine metabolism; carnitine metabolism. Catalyzes the exchange of L-carnitine for gamma-butyrobetaine. In Escherichia coli (strain ATCC 8739 / DSM 1576 / NBRC 3972 / NCIMB 8545 / WDCM 00012 / Crooks), this protein is L-carnitine/gamma-butyrobetaine antiporter.